A 332-amino-acid chain; its full sequence is Nucleoid-associated protein VIBHAR_03026 (332 aa).

The protein belongs to the YejK family.

Its subcellular location is the cytoplasm. It localises to the nucleoid. This Vibrio campbellii (strain ATCC BAA-1116) protein is Nucleoid-associated protein VIBHAR_03026.